A 293-amino-acid polypeptide reads, in one-letter code: 4-hydroxy-tetrahydrodipicolinate synthase (293 aa).

Thr44 is a binding site for pyruvate. Tyr132 acts as the Proton donor/acceptor in catalysis. Catalysis depends on Lys161, which acts as the Schiff-base intermediate with substrate. Ile203 is a binding site for pyruvate.

This sequence belongs to the DapA family. As to quaternary structure, homotetramer; dimer of dimers.

It is found in the cytoplasm. It catalyses the reaction L-aspartate 4-semialdehyde + pyruvate = (2S,4S)-4-hydroxy-2,3,4,5-tetrahydrodipicolinate + H2O + H(+). The protein operates within amino-acid biosynthesis; L-lysine biosynthesis via DAP pathway; (S)-tetrahydrodipicolinate from L-aspartate: step 3/4. Functionally, catalyzes the condensation of (S)-aspartate-beta-semialdehyde [(S)-ASA] and pyruvate to 4-hydroxy-tetrahydrodipicolinate (HTPA). The polypeptide is 4-hydroxy-tetrahydrodipicolinate synthase (Sulfurihydrogenibium sp. (strain YO3AOP1)).